The primary structure comprises 282 residues: Formamidopyrimidine-DNA glycosylase (282 aa).

Residue Pro-2 is the Schiff-base intermediate with DNA of the active site. Glu-3 serves as the catalytic Proton donor. Catalysis depends on Lys-60, which acts as the Proton donor; for beta-elimination activity. Positions 99, 118, and 163 each coordinate DNA. The FPG-type zinc finger occupies 248 to 282 (LVYRRSGKNCKKCGEKILREKICGRSTHWCPNCQK). The active-site Proton donor; for delta-elimination activity is the Arg-272.

This sequence belongs to the FPG family. In terms of assembly, monomer. The cofactor is Zn(2+).

It carries out the reaction Hydrolysis of DNA containing ring-opened 7-methylguanine residues, releasing 2,6-diamino-4-hydroxy-5-(N-methyl)formamidopyrimidine.. The catalysed reaction is 2'-deoxyribonucleotide-(2'-deoxyribose 5'-phosphate)-2'-deoxyribonucleotide-DNA = a 3'-end 2'-deoxyribonucleotide-(2,3-dehydro-2,3-deoxyribose 5'-phosphate)-DNA + a 5'-end 5'-phospho-2'-deoxyribonucleoside-DNA + H(+). Functionally, involved in base excision repair of DNA damaged by oxidation or by mutagenic agents. Acts as a DNA glycosylase that recognizes and removes damaged bases. Has a preference for oxidized purines, such as 7,8-dihydro-8-oxoguanine (8-oxoG). Has AP (apurinic/apyrimidinic) lyase activity and introduces nicks in the DNA strand. Cleaves the DNA backbone by beta-delta elimination to generate a single-strand break at the site of the removed base with both 3'- and 5'-phosphates. The protein is Formamidopyrimidine-DNA glycosylase of Prochlorococcus marinus (strain NATL1A).